The chain runs to 88 residues: Large ribosomal subunit protein bL27 (88 aa).

The tract at residues 1–24 is disordered; it reads MAHKKAGGSSRNGRDSAGQRRGVK.

Belongs to the bacterial ribosomal protein bL27 family.

The sequence is that of Large ribosomal subunit protein bL27 from Syntrophobacter fumaroxidans (strain DSM 10017 / MPOB).